The sequence spans 401 residues: Imidazolonepropionase (401 aa).

2 residues coordinate Fe(3+): His70 and His72. The Zn(2+) site is built by His70 and His72. Residues Arg79, Tyr142, and His175 each contribute to the 4-imidazolone-5-propanoate site. Tyr142 serves as a coordination point for N-formimidoyl-L-glutamate. His238 is a binding site for Fe(3+). Zn(2+) is bound at residue His238. Gln241 provides a ligand contact to 4-imidazolone-5-propanoate. Asp313 provides a ligand contact to Fe(3+). Asp313 serves as a coordination point for Zn(2+). Asn315 and Gly317 together coordinate N-formimidoyl-L-glutamate. Residue Thr318 coordinates 4-imidazolone-5-propanoate.

The protein belongs to the metallo-dependent hydrolases superfamily. HutI family. Requires Zn(2+) as cofactor. The cofactor is Fe(3+).

The protein resides in the cytoplasm. The enzyme catalyses 4-imidazolone-5-propanoate + H2O = N-formimidoyl-L-glutamate. The protein operates within amino-acid degradation; L-histidine degradation into L-glutamate; N-formimidoyl-L-glutamate from L-histidine: step 3/3. Functionally, catalyzes the hydrolytic cleavage of the carbon-nitrogen bond in imidazolone-5-propanoate to yield N-formimidoyl-L-glutamate. It is the third step in the universal histidine degradation pathway. The protein is Imidazolonepropionase of Xanthomonas oryzae pv. oryzae (strain MAFF 311018).